Here is a 428-residue protein sequence, read N- to C-terminus: Gamma-glutamyl phosphate reductase (428 aa).

The protein belongs to the gamma-glutamyl phosphate reductase family.

Its subcellular location is the cytoplasm. It catalyses the reaction L-glutamate 5-semialdehyde + phosphate + NADP(+) = L-glutamyl 5-phosphate + NADPH + H(+). The protein operates within amino-acid biosynthesis; L-proline biosynthesis; L-glutamate 5-semialdehyde from L-glutamate: step 2/2. In terms of biological role, catalyzes the NADPH-dependent reduction of L-glutamate 5-phosphate into L-glutamate 5-semialdehyde and phosphate. The product spontaneously undergoes cyclization to form 1-pyrroline-5-carboxylate. The polypeptide is Gamma-glutamyl phosphate reductase (Chromohalobacter salexigens (strain ATCC BAA-138 / DSM 3043 / CIP 106854 / NCIMB 13768 / 1H11)).